We begin with the raw amino-acid sequence, 150 residues long: UPF0756 membrane protein plu2726 (150 aa).

Helical transmembrane passes span 8-28 (LLVL…TVTL), 51-71 (YGLT…IASG), 88-108 (LLAI…VSLM), and 123-143 (VLGV…AGIL).

The protein belongs to the UPF0756 family.

It is found in the cell membrane. The sequence is that of UPF0756 membrane protein plu2726 from Photorhabdus laumondii subsp. laumondii (strain DSM 15139 / CIP 105565 / TT01) (Photorhabdus luminescens subsp. laumondii).